A 291-amino-acid polypeptide reads, in one-letter code: MQSMLCGRPVAADRQLIMAIVNRTPDSFYDRGATFSDEAARAAAHRAVAEGADVIDVGGVKAGPGQGVDVDTEIARLVPFIEWLRSAYTDLLISVDTWRAEVARLACTAGADLINDSWGGADPAMHEVAAELGAGLVCSHTGGALPRTRPFRVSYGTTTRGVVDDVIRQVTAAAERAVAAGVTRDSVLVDPTHDFGKNTFHGLLLLRHVDELVKTGWPVLMSLSNKDFVGETLGVGLTERLEGTLAATALAAAAGVRMFRVHEVVATRRVLEMVASIQGTRPPTRTVRGLA.

Positions 15–272 (QLIMAIVNRT…EVVATRRVLE (258 aa)) constitute a Pterin-binding domain.

Belongs to the DHPS family. As to quaternary structure, homodimer.

In terms of biological role, has very low affinity for the DHPS substrate 6-hydroxymethyl-7,8-dihydropterin-pyrophosphate, but can bind the inhibitor dapsone. Seems to lack dihydropteroate synthase activity, and does probably not function in folate metabolism. The polypeptide is Inactive dihydropteroate synthase 2 (folP2) (Mycobacterium leprae (strain TN)).